The chain runs to 205 residues: MIGRLSGILVEKQAPEVVLDVNGVGYELQVPMTSFYELPALNQAAMLFTHFVVREDAQLLYGFITKQERALFRLLIKTNGVGPKLALTILSGMTASEFVSCVERDDIATLVKLPGVGKKTAERLVIEMRDKLKSLLEASAGSEREFMLQSNYTPAAAVDSAEEDAISALLSLGYKPAQASKSVSAAFKEGMSSETLIKAALKSML.

The interval 1 to 64 is domain I; it reads MIGRLSGILV…EDAQLLYGFI (64 aa). Residues 65-143 are domain II; that stretch reads TKQERALFRL…SLLEASAGSE (79 aa). Residues 144–156 are flexible linker; it reads REFMLQSNYTPAA. Residues 157-205 are domain III; the sequence is AVDSAEEDAISALLSLGYKPAQASKSVSAAFKEGMSSETLIKAALKSML.

Belongs to the RuvA family. Homotetramer. Forms an RuvA(8)-RuvB(12)-Holliday junction (HJ) complex. HJ DNA is sandwiched between 2 RuvA tetramers; dsDNA enters through RuvA and exits via RuvB. An RuvB hexamer assembles on each DNA strand where it exits the tetramer. Each RuvB hexamer is contacted by two RuvA subunits (via domain III) on 2 adjacent RuvB subunits; this complex drives branch migration. In the full resolvosome a probable DNA-RuvA(4)-RuvB(12)-RuvC(2) complex forms which resolves the HJ.

The protein resides in the cytoplasm. Functionally, the RuvA-RuvB-RuvC complex processes Holliday junction (HJ) DNA during genetic recombination and DNA repair, while the RuvA-RuvB complex plays an important role in the rescue of blocked DNA replication forks via replication fork reversal (RFR). RuvA specifically binds to HJ cruciform DNA, conferring on it an open structure. The RuvB hexamer acts as an ATP-dependent pump, pulling dsDNA into and through the RuvAB complex. HJ branch migration allows RuvC to scan DNA until it finds its consensus sequence, where it cleaves and resolves the cruciform DNA. This is Holliday junction branch migration complex subunit RuvA from Shewanella frigidimarina (strain NCIMB 400).